Consider the following 33-residue polypeptide: Cysteine-rich venom protein tripurin (33 aa).

Belongs to the CRISP family. In terms of processing, contains 8 disulfide bonds. As to expression, expressed by the venom gland.

The protein resides in the secreted. Its function is as follows. Blocks contraction of smooth muscle elicited by high potassium-induced depolarization, but does not block caffeine-stimulated contraction. May target voltage-gated calcium channels on smooth muscle. The sequence is that of Cysteine-rich venom protein tripurin from Trimeresurus purpureomaculatus (Mangrove pit viper).